Here is a 685-residue protein sequence, read N- to C-terminus: Multisite-specific tRNA:(cytosine-C(5))-methyltransferase trm4b (685 aa).

Residues 167–173 (CAAPGSK), aspartate 208, aspartate 235, and aspartate 270 each bind S-adenosyl-L-methionine. Cysteine 323 (nucleophile) is an active-site residue.

The protein belongs to the class I-like SAM-binding methyltransferase superfamily. RsmB/NOP family. TRM4 subfamily.

It is found in the nucleus. It catalyses the reaction cytidine(49) in tRNA precursor + S-adenosyl-L-methionine = 5-methylcytidine(49) in tRNA precursor + S-adenosyl-L-homocysteine + H(+). The enzyme catalyses cytidine(50) in tRNA + S-adenosyl-L-methionine = 5-methylcytidine(50) in tRNA + S-adenosyl-L-homocysteine + H(+). The catalysed reaction is cytidine(60) in tRNA(Asp) + S-adenosyl-L-methionine = 5-methylcytidine(60) in tRNA(Asp) + S-adenosyl-L-homocysteine + H(+). It carries out the reaction cytidine(61) in tRNA(Asp) + S-adenosyl-L-methionine = 5-methylcytidine(61) in tRNA(Asp) + S-adenosyl-L-homocysteine + H(+). It catalyses the reaction cytidine(62) in tRNA(Asp) + S-adenosyl-L-methionine = 5-methylcytidine(62) in tRNA(Asp) + S-adenosyl-L-homocysteine + H(+). In terms of biological role, tRNA cytosine C(5)-methyltransferase that methylates cytosine to 5-methylcytosine (m5C) in tRNAs at position 49 and 50. Trm4a and trm4b methylate different sets of tRNAs. Also methylates cytosine to m5C at positions (60, 61 and 62) in tRNA(Asp). This chain is Multisite-specific tRNA:(cytosine-C(5))-methyltransferase trm4b, found in Schizosaccharomyces pombe (strain 972 / ATCC 24843) (Fission yeast).